Here is a 129-residue protein sequence, read N- to C-terminus: Small ribosomal subunit protein uS11 (129 aa).

Belongs to the universal ribosomal protein uS11 family. Part of the 30S ribosomal subunit. Interacts with proteins S7 and S18. Binds to IF-3.

Located on the platform of the 30S subunit, it bridges several disparate RNA helices of the 16S rRNA. Forms part of the Shine-Dalgarno cleft in the 70S ribosome. The sequence is that of Small ribosomal subunit protein uS11 from Haemophilus ducreyi (strain 35000HP / ATCC 700724).